A 273-amino-acid polypeptide reads, in one-letter code: Protein INAPERTURATE POLLEN1 (273 aa).

In terms of domain architecture, DOG1 spans 12–267 (SRRFNDFYED…KDQILLQDFE (256 aa)).

As to expression, expressed only in anthers and in pollen. Not detected in other flower tissues, stems, leaves and siliques.

Its subcellular location is the cytoplasm. In terms of biological role, required for the formation of pollen surface apertures, which arise by restriction of exine deposition at specific sites. The aperture length depends on the INP1 dosage. Does not play a role in specifying the number or position of apertures. Acts in a sporophytic manner. The sequence is that of Protein INAPERTURATE POLLEN1 from Arabidopsis thaliana (Mouse-ear cress).